The sequence spans 241 residues: Small ribosomal subunit protein uS3 (241 aa).

The KH type-2 domain maps to 39–109; that stretch reads IRQHVEKNLS…QIRINVIEVS (71 aa). Residues 215 to 241 form a disordered region; sequence EQAMAAPAPTPRKKRRPQQFEDRSNEE. The segment covering 232–241 has biased composition (basic and acidic residues); the sequence is QQFEDRSNEE.

This sequence belongs to the universal ribosomal protein uS3 family. In terms of assembly, part of the 30S ribosomal subunit. Forms a tight complex with proteins S10 and S14.

Functionally, binds the lower part of the 30S subunit head. Binds mRNA in the 70S ribosome, positioning it for translation. The chain is Small ribosomal subunit protein uS3 from Crocosphaera subtropica (strain ATCC 51142 / BH68) (Cyanothece sp. (strain ATCC 51142)).